Here is a 491-residue protein sequence, read N- to C-terminus: Cytochrome P450 2C40 (491 aa).

The first 25 residues, 1–25, serve as a signal peptide directing secretion; sequence MDPFVVLVLCLSFLLVLSLWRQRSA. Cys435 serves as a coordination point for heme.

Belongs to the cytochrome P450 family. Requires heme as cofactor. Liver, brain, kidney, and intestine, with trace amounts in lung and heart. Expressed throughout the intestinal tract, with higher expression levels in jejunum, cecum and colon.

It is found in the endoplasmic reticulum membrane. The protein localises to the microsome membrane. The catalysed reaction is (5Z,8Z,11Z,14Z)-eicosatetraenoate + reduced [NADPH--hemoprotein reductase] + O2 = 16(R)-hydroxy-(5Z,8Z,11Z,14Z)-eicosatetraenoate + oxidized [NADPH--hemoprotein reductase] + H2O + H(+). It carries out the reaction (5Z,8Z,11Z,14Z)-eicosatetraenoate + reduced [NADPH--hemoprotein reductase] + O2 = 16(S)-hydroxy-(5Z,8Z,11Z,14Z)-eicosatetraenoate + oxidized [NADPH--hemoprotein reductase] + H2O + H(+). The enzyme catalyses (5Z,8Z,11Z,14Z)-eicosatetraenoate + reduced [NADPH--hemoprotein reductase] + O2 = (14R,15S)-epoxy-(5Z,8Z,11Z)-eicosatrienoate + oxidized [NADPH--hemoprotein reductase] + H2O + H(+). It catalyses the reaction (5Z,8Z,11Z,14Z)-eicosatetraenoate + reduced [NADPH--hemoprotein reductase] + O2 = (14S,15R)-epoxy-(5Z,8Z,11Z)-eicosatrienoate + oxidized [NADPH--hemoprotein reductase] + H2O + H(+). Its pathway is lipid metabolism; arachidonate metabolism. A cytochrome P450 monooxygenase that may play a major role in the metabolism of arachidonic acid in the intestinal tract. Exhibits regioselective hydroxylase and epoxidase activity toward arachidonic acid, producing 16(R)-hydroxyeicosatetraenoic acid (HETE) and (14R,15S)-epoxyeicosatrienoic acid (EpETrE) as major products. Mechanistically, uses molecular oxygen inserting one oxygen atom into a substrate, and reducing the second into a water molecule, with two electrons provided by NADPH via cytochrome P450 reductase (CPR; NADPH-ferrihemoprotein reductase). The polypeptide is Cytochrome P450 2C40 (Mus musculus (Mouse)).